A 285-amino-acid polypeptide reads, in one-letter code: Nucleotide-binding protein Geob_2284 (285 aa).

An ATP-binding site is contributed by 8 to 15 (GLSGSGKS). Residue 59–62 (DIRG) participates in GTP binding.

The protein belongs to the RapZ-like family.

In terms of biological role, displays ATPase and GTPase activities. The polypeptide is Nucleotide-binding protein Geob_2284 (Geotalea daltonii (strain DSM 22248 / JCM 15807 / FRC-32) (Geobacter daltonii)).